Here is a 134-residue protein sequence, read N- to C-terminus: UPF0412 protein YaaI (134 aa).

A signal peptide spans 1–23 (MKSVFTISASLAISLMLCCTAQA).

Belongs to the UPF0412 family.

The polypeptide is UPF0412 protein YaaI (Escherichia coli O157:H7).